The sequence spans 317 residues: uncharacterized protein (317 aa).

Helical transmembrane passes span 18–38 (WWII…LIII), 58–78 (IIFG…GFIF), 92–112 (FLGH…WWSV), 130–150 (LFAT…AFGV), 165–185 (QPLS…KGEL), 202–222 (LAFL…LSTV), and 253–273 (LWGG…LMVN).

It belongs to the CbiQ family.

It localises to the cell membrane. This is an uncharacterized protein from Mycoplasma pneumoniae (strain ATCC 29342 / M129 / Subtype 1) (Mycoplasmoides pneumoniae).